The chain runs to 155 residues: Ribosome maturation factor RimP (155 aa).

Belongs to the RimP family.

It is found in the cytoplasm. Functionally, required for maturation of 30S ribosomal subunits. The sequence is that of Ribosome maturation factor RimP from Exiguobacterium sibiricum (strain DSM 17290 / CCUG 55495 / CIP 109462 / JCM 13490 / 255-15).